Reading from the N-terminus, the 442-residue chain is 4-hydroxyphenylpyruvate dioxygenase (442 aa).

2 VOC domains span residues R45–A200 and R216–K376. Fe cation is bound by residues H219, H301, and E387.

It belongs to the 4HPPD family. It depends on Fe cation as a cofactor.

It is found in the cytoplasm. It carries out the reaction 3-(4-hydroxyphenyl)pyruvate + O2 = homogentisate + CO2. The protein operates within amino-acid degradation; L-phenylalanine degradation; acetoacetate and fumarate from L-phenylalanine: step 3/6. Its pathway is cofactor biosynthesis; prenylquinone biosynthesis. This is 4-hydroxyphenylpyruvate dioxygenase from Daucus carota (Wild carrot).